We begin with the raw amino-acid sequence, 394 residues long: Elongation factor Tu (394 aa).

The 195-residue stretch at 10-204 (KPHINIGTIG…AVDDNIPTPE (195 aa)) folds into the tr-type G domain. The G1 stretch occupies residues 19–26 (GHVDHGKT). 19-26 (GHVDHGKT) is a binding site for GTP. Thr-26 provides a ligand contact to Mg(2+). The tract at residues 60 to 64 (GITIN) is G2. A G3 region spans residues 81-84 (DCPG). Residues 81 to 85 (DCPGH) and 136 to 139 (NKID) contribute to the GTP site. Positions 136-139 (NKID) are G4. A G5 region spans residues 174-176 (SAL).

Belongs to the TRAFAC class translation factor GTPase superfamily. Classic translation factor GTPase family. EF-Tu/EF-1A subfamily. As to quaternary structure, monomer.

It is found in the cytoplasm. It carries out the reaction GTP + H2O = GDP + phosphate + H(+). GTP hydrolase that promotes the GTP-dependent binding of aminoacyl-tRNA to the A-site of ribosomes during protein biosynthesis. This chain is Elongation factor Tu, found in Chlamydia abortus (strain DSM 27085 / S26/3) (Chlamydophila abortus).